The chain runs to 397 residues: 1-deoxy-D-xylulose 5-phosphate reductoisomerase (397 aa).

The NADPH site is built by T10, G11, S12, I13, G36, K37, N38, and N124. Residue K125 participates in 1-deoxy-D-xylulose 5-phosphate binding. E126 is a binding site for NADPH. D150 provides a ligand contact to Mn(2+). S151, E152, S186, and H209 together coordinate 1-deoxy-D-xylulose 5-phosphate. Residue E152 coordinates Mn(2+). Residue G215 coordinates NADPH. 1-deoxy-D-xylulose 5-phosphate contacts are provided by S222, N227, K228, and E231. Position 231 (E231) interacts with Mn(2+).

This sequence belongs to the DXR family. Homodimer. The cofactor is Mg(2+). Mn(2+) serves as cofactor.

The catalysed reaction is 2-C-methyl-D-erythritol 4-phosphate + NADP(+) = 1-deoxy-D-xylulose 5-phosphate + NADPH + H(+). Its pathway is isoprenoid biosynthesis; isopentenyl diphosphate biosynthesis via DXP pathway; isopentenyl diphosphate from 1-deoxy-D-xylulose 5-phosphate: step 1/6. Its function is as follows. Catalyzes the NADPH-dependent rearrangement and reduction of 1-deoxy-D-xylulose-5-phosphate (DXP) to 2-C-methyl-D-erythritol 4-phosphate (MEP). This is 1-deoxy-D-xylulose 5-phosphate reductoisomerase from Proteus mirabilis (strain HI4320).